Here is a 373-residue protein sequence, read N- to C-terminus: Core trichothecene cluster (CTC) protein 14 (373 aa).

It belongs to the TRI14 family.

Part of the core gene cluster that mediates the biosynthesis of trichothecenes, a very large family of chemically related bicyclic sesquiterpene compounds acting as mycotoxins, including T2-toxin. The biosynthesis of trichothecenes begins with the cyclization of farnesyl diphosphate to trichodiene and is catalyzed by the trichodiene synthase TRI5. Trichodiene undergoes a series of oxygenations catalyzed by the cytochrome P450 monooxygenase TRI4. TRI4 controls the addition of four oxygens at C-2, C-3, C-11, and the C-12, C-13-epoxide to form the intermediate isotrichotriol. Isotrichotriol then undergoes a non-enzymatic isomerization and cyclization to form isotrichodermol. During this process, the oxygen at the C-2 position becomes the pyran ring oxygen and the hydroxyl group at C-11 is lost. More complex type A trichothecenes are built by modifying isotrichodermol through a series of paired hydroxylation and acetylation or acylation steps. Isotrichodermol is converted to isotrichodermin by the acetyltransferase TRI101. TRI101 encodes a C-3 transacetylase that acts as a self-protection or resistance factor during biosynthesis and that the presence of a free C-3 hydroxyl group is a key component of Fusarium trichothecene phytotoxicity. A second hydroxyl group is added to C-15 by the trichothecene C-15 hydroxylase TRI11, producing 15-decalonectrin, which is then acetylated by TRI3, producing calonectrin. A third hydroxyl group is added at C-4 by the cytochrome P450 monooxygenase TRI13, converting calonectrin to 3,15-diacetoxyspirpenol, which is subsequently acetylated bythe acetyltransferase TRI7. A fourth hydroxyl group is added to C-8 by the cytochrome P450 monooxygenase TRI1, followed by the addition of an isovaleryl moiety by TRI16. Finally, the acetyl group is removed from the C-3 position by the trichothecene C-3 esterase TRI8 to produce T-2 toxin. This Fusarium sporotrichioides protein is Core trichothecene cluster (CTC) protein 14.